The sequence spans 214 residues: ATP phosphoribosyltransferase (214 aa).

Belongs to the ATP phosphoribosyltransferase family. Short subfamily. In terms of assembly, heteromultimer composed of HisG and HisZ subunits.

It is found in the cytoplasm. The catalysed reaction is 1-(5-phospho-beta-D-ribosyl)-ATP + diphosphate = 5-phospho-alpha-D-ribose 1-diphosphate + ATP. It functions in the pathway amino-acid biosynthesis; L-histidine biosynthesis; L-histidine from 5-phospho-alpha-D-ribose 1-diphosphate: step 1/9. Its function is as follows. Catalyzes the condensation of ATP and 5-phosphoribose 1-diphosphate to form N'-(5'-phosphoribosyl)-ATP (PR-ATP). Has a crucial role in the pathway because the rate of histidine biosynthesis seems to be controlled primarily by regulation of HisG enzymatic activity. The polypeptide is ATP phosphoribosyltransferase (Ruminiclostridium cellulolyticum (strain ATCC 35319 / DSM 5812 / JCM 6584 / H10) (Clostridium cellulolyticum)).